Reading from the N-terminus, the 169-residue chain is Caltractin (169 aa).

The interval 1 to 24 (MSYRKTVVSARRDQKKGRVGGLTE) is disordered. EF-hand domains are found at residues 25–60 (EQKQEIREAFDLFDTDGSGTIDAKELKVAMRALGFE), 61–96 (PKKEEIKKMIADIDKAGSGTIDFEEFLQMMTSKMGE), 98–133 (DSREEIIKAFKLFDDDNTGFITLKNLKRVAKELGEN), and 134–169 (LTDEELQEMTDEADRNGDGQIDEDEFYRIMKKTSLF). Ca(2+) is bound by residues Asp38, Asp40, Ser42, Thr44, and Glu49. 5 residues coordinate Ca(2+): Asp147, Asn149, Asp151, Gln153, and Glu158.

Belongs to the centrin family.

In terms of biological role, this calcium-binding protein is found in the basal body complexes (the functional homolog of the centrosome in animal cell). In mitotic cells it is specifically associated with the poles of the mitotic spindles at the sites of the duplicated basal body complexes. The sequence is that of Caltractin from Dunaliella salina (Green alga).